Reading from the N-terminus, the 108-residue chain is MAVEDVVLASVRSVVKISFGCKIFSMSSSFKLGKGSIRGASLTFDSLVVPVFAALFMAPTIQLSFCLFCFLSLPALFVKHTSNSLPLSTGTVLLFGICCQVAKSLLKI.

2 helical membrane passes run V51–L71 and P86–L106.

The protein resides in the membrane. This is an uncharacterized protein from Saccharomyces cerevisiae (strain ATCC 204508 / S288c) (Baker's yeast).